Here is a 78-residue protein sequence, read N- to C-terminus: Putative permease-like protein YdzE (78 aa).

Transmembrane regions (helical) follow at residues 2–22, 27–47, and 49–69; these read YLGI…LQLL, GGLF…ILLG, and QIGG…LLVI. The EamA domain occupies 2-70; that stretch reads YLGIVSTACA…ILSGVLLVIK (69 aa).

This sequence belongs to the EamA transporter family.

The protein resides in the cell membrane. This is Putative permease-like protein YdzE (ydzE) from Bacillus subtilis (strain 168).